Reading from the N-terminus, the 254-residue chain is tRNA (guanine-N(1)-)-methyltransferase (254 aa).

Residues G113 and 133 to 138 (IGDYVL) contribute to the S-adenosyl-L-methionine site.

This sequence belongs to the RNA methyltransferase TrmD family. As to quaternary structure, homodimer.

It is found in the cytoplasm. It catalyses the reaction guanosine(37) in tRNA + S-adenosyl-L-methionine = N(1)-methylguanosine(37) in tRNA + S-adenosyl-L-homocysteine + H(+). Specifically methylates guanosine-37 in various tRNAs. This chain is tRNA (guanine-N(1)-)-methyltransferase, found in Edwardsiella ictaluri (strain 93-146).